The chain runs to 597 residues: Putative diflavin flavoprotein A 3 (597 aa).

The zinc metallo-hydrolase stretch occupies residues 59 to 254 (QRGTTANSYL…YPAQTYAPSH (196 aa)). The region spanning 283–421 (VALIYASAYG…MCEEAGTDFA (139 aa)) is the Flavodoxin-like domain. A flavodoxin-reductase-like region spans residues 449-597 (LGRLVGSLCV…VHHRKSGDHY (149 aa)).

It in the N-terminal section; belongs to the zinc metallo-hydrolase group 3 family. In the C-terminal section; belongs to the flavodoxin reductase family. Fe cation serves as cofactor.

Its function is as follows. Mediates electron transfer from NADH to oxygen, reducing it to water. This modular protein has 3 redox cofactors, in other organisms the same activity requires 2 or 3 proteins. This is Putative diflavin flavoprotein A 3 (dfa3) from Synechocystis sp. (strain ATCC 27184 / PCC 6803 / Kazusa).